We begin with the raw amino-acid sequence, 284 residues long: Phosphatidylserine decarboxylase proenzyme (284 aa).

Catalysis depends on charge relay system; for autoendoproteolytic cleavage activity residues Asp88, His145, and Ser248. The active-site Schiff-base intermediate with substrate; via pyruvic acid; for decarboxylase activity is Ser248. The residue at position 248 (Ser248) is a Pyruvic acid (Ser); by autocatalysis.

Belongs to the phosphatidylserine decarboxylase family. PSD-B subfamily. Prokaryotic type I sub-subfamily. As to quaternary structure, heterodimer of a large membrane-associated beta subunit and a small pyruvoyl-containing alpha subunit. It depends on pyruvate as a cofactor. In terms of processing, is synthesized initially as an inactive proenzyme. Formation of the active enzyme involves a self-maturation process in which the active site pyruvoyl group is generated from an internal serine residue via an autocatalytic post-translational modification. Two non-identical subunits are generated from the proenzyme in this reaction, and the pyruvate is formed at the N-terminus of the alpha chain, which is derived from the carboxyl end of the proenzyme. The autoendoproteolytic cleavage occurs by a canonical serine protease mechanism, in which the side chain hydroxyl group of the serine supplies its oxygen atom to form the C-terminus of the beta chain, while the remainder of the serine residue undergoes an oxidative deamination to produce ammonia and the pyruvoyl prosthetic group on the alpha chain. During this reaction, the Ser that is part of the protease active site of the proenzyme becomes the pyruvoyl prosthetic group, which constitutes an essential element of the active site of the mature decarboxylase.

It is found in the cell membrane. The catalysed reaction is a 1,2-diacyl-sn-glycero-3-phospho-L-serine + H(+) = a 1,2-diacyl-sn-glycero-3-phosphoethanolamine + CO2. Its pathway is phospholipid metabolism; phosphatidylethanolamine biosynthesis; phosphatidylethanolamine from CDP-diacylglycerol: step 2/2. Its function is as follows. Catalyzes the formation of phosphatidylethanolamine (PtdEtn) from phosphatidylserine (PtdSer). In Albidiferax ferrireducens (strain ATCC BAA-621 / DSM 15236 / T118) (Rhodoferax ferrireducens), this protein is Phosphatidylserine decarboxylase proenzyme.